The following is a 438-amino-acid chain: Citrate synthase (438 aa).

Residues His306 and Asp364 contribute to the active site.

Belongs to the citrate synthase family.

The catalysed reaction is oxaloacetate + acetyl-CoA + H2O = citrate + CoA + H(+). The protein operates within carbohydrate metabolism; tricarboxylic acid cycle; isocitrate from oxaloacetate: step 1/2. The sequence is that of Citrate synthase (gltA) from Bartonella quintana (strain Toulouse) (Rochalimaea quintana).